Consider the following 197-residue polypeptide: MAKLYFRYSAMDAGKTLDLLKVAYNYEDRGRKPLVLTSAIDKRAGLNKVKSRIGIDQDAYSLTDRDNIFEFVENYNSSNKIDCVLIDEIHFFTQEQVWQLAEIVDELNIPVICYGLRTNYLGQPFETAALLLAIADTLEEVKTICHCGKKASFNMMVQNGKAIKQGNPIVVDDDSLKEIDTKYVSVCRKHWKEGVYE.

ATP contacts are provided by residues 9 to 16 (SAMDAGKT) and 87 to 90 (DEIH). Glu-88 acts as the Proton acceptor in catalysis. Zn(2+) is bound by residues Cys-145, Cys-147, Cys-187, and His-190.

This sequence belongs to the thymidine kinase family. As to quaternary structure, homotetramer.

Its subcellular location is the cytoplasm. It carries out the reaction thymidine + ATP = dTMP + ADP + H(+). The polypeptide is Thymidine kinase (Francisella tularensis subsp. holarctica (strain LVS)).